A 25-amino-acid chain; its full sequence is Small ribosomal subunit protein eS32B (25 aa).

Residues 1–25 (MRAKWRKKRTRRLKRKRRKVRARSK) form a disordered region.

This sequence belongs to the eukaryotic ribosomal protein eS32 family. In terms of assembly, component of the small ribosomal subunit (SSU). Mature yeast ribosomes consist of a small (40S) and a large (60S) subunit. The 40S small subunit contains 1 molecule of ribosomal RNA (18S rRNA) and 33 different proteins (encoded by 57 genes). The large 60S subunit contains 3 rRNA molecules (25S, 5.8S and 5S rRNA) and 46 different proteins (encoded by 81 genes).

Its subcellular location is the cytoplasm. In terms of biological role, component of the ribosome, a large ribonucleoprotein complex responsible for the synthesis of proteins in the cell. The small ribosomal subunit (SSU) binds messenger RNAs (mRNAs) and translates the encoded message by selecting cognate aminoacyl-transfer RNA (tRNA) molecules. The large subunit (LSU) contains the ribosomal catalytic site termed the peptidyl transferase center (PTC), which catalyzes the formation of peptide bonds, thereby polymerizing the amino acids delivered by tRNAs into a polypeptide chain. The nascent polypeptides leave the ribosome through a tunnel in the LSU and interact with protein factors that function in enzymatic processing, targeting, and the membrane insertion of nascent chains at the exit of the ribosomal tunnel. This Saccharomyces cerevisiae (strain ATCC 204508 / S288c) (Baker's yeast) protein is Small ribosomal subunit protein eS32B.